Reading from the N-terminus, the 474-residue chain is Sestrin homolog (474 aa).

This sequence belongs to the sestrin family.

It is found in the nucleus. The protein localises to the cytoplasm. In terms of biological role, may function as a negative feedback regulator of TOR function. The chain is Sestrin homolog from Caenorhabditis elegans.